A 48-amino-acid chain; its full sequence is Palustrin-3a (48 aa).

The cysteines at positions 43 and 48 are disulfide-linked.

In terms of tissue distribution, expressed by the skin glands.

The protein resides in the secreted. Its function is as follows. Antimicrobial activity against Gram-negative bacterium E.coli. This is Palustrin-3a from Lithobates palustris (Pickerel frog).